Consider the following 914-residue polypeptide: Solute carrier family 12 member 9 (914 aa).

The Cytoplasmic portion of the chain corresponds to 1–36; sequence MASESSPLLAYRLLGEEGVALPANGAGGPGGASARK. S6 bears the Phosphoserine mark. The helical transmembrane segment at 37-57 threads the bilayer; it reads LSTFLGVVVPTVLSMFSIVVF. The Extracellular portion of the chain corresponds to 58–72; sequence LRIGFVVGHAGLLQA. Residues 73–93 form a helical membrane-spanning segment; the sequence is LAMLLVAYFILALTVLSVCAI. Over 94–119 the chain is Cytoplasmic; that stretch reads ATNGAVQGGGAYFMISRTLGPEVGGS. Residues 120–140 form a helical membrane-spanning segment; sequence IGLMFYLANVCGCAVSLLGLV. At 141 to 167 the chain is on the extracellular side; sequence ESVLDVFGADATGPSGLRVLPQGYGWN. The helical transmembrane segment at 168-188 threads the bilayer; the sequence is LLYGSLLLGLVGGVCTLGAGL. Over 189–193 the chain is Cytoplasmic; sequence YARAS. The helical transmembrane segment at 194–214 threads the bilayer; it reads FLTFLLVSGSLASVLISFVAV. The Extracellular portion of the chain corresponds to 215-262; that stretch reads GPRDIRLTPRPGPNGSSLPPRFGHFTGFNSSTLKDNLGAGYAEDYTTG. 2 N-linked (GlcNAc...) asparagine glycosylation sites follow: N228 and N243. The helical transmembrane segment at 263–283 threads the bilayer; sequence AVMNFASVFAVLFNGCTGIMA. The Cytoplasmic portion of the chain corresponds to 284-297; it reads GANMSGELKDPSRA. A helical membrane pass occupies residues 298 to 318; that stretch reads IPLGTIVAVAYTFFVYVLLFF. Over 319–338 the chain is Extracellular; the sequence is LSSFTCDRTLLQEDYGFFRA. The helical transmembrane segment at 339 to 359 threads the bilayer; it reads ISLWPPLVLIGIYATALSASM. Residues 360–390 are Cytoplasmic-facing; sequence SSLIGASRILHALARDDLFGVILAPAKVVSR. A helical membrane pass occupies residues 391–411; sequence GGNPWAAVLYSWGLVQLVLLA. The Extracellular segment spans residues 412–416; it reads GKLNT. Residues 417–437 form a helical membrane-spanning segment; the sequence is LAAVVTVFYLVAYAAVDLSCL. Over 438 to 466 the chain is Cytoplasmic; the sequence is SLEWASAPNFRPTFSLFSWHTCLLGVASC. Residues 467-487 traverse the membrane as a helical segment; the sequence is LLMMFLISPGAAGGSLLLMGL. The Extracellular portion of the chain corresponds to 488–740; it reads LAALLTARGG…LLRPRGGPGY (253 aa). Residues 642 to 678 form a disordered region; the sequence is LTDPAFSEPADSTREGSSPALSTLFPPPRAPGSPRAL. Residues 741–761 form a helical membrane-spanning segment; that stretch reads VDVCGLFLLQMATILGMVPAW. Residues 762-914 are Cytoplasmic-facing; sequence HSARLRIFLC…GVTPVTCTDL (153 aa). The tract at residues 844-863 is disordered; that stretch reads QQGRGTGGGPGGPEGGDAEG. Residues 847–858 show a composition bias toward gly residues; it reads RGTGGGPGGPEG.

The protein belongs to the SLC12A transporter family. As to quaternary structure, interacts with SLC12A1. In terms of tissue distribution, highly expressed in placenta, brain and kidney. Lower expression in lung, liver and heart.

It localises to the cell membrane. Its subcellular location is the lysosome membrane. In terms of biological role, may be an inhibitor of SLC12A1. Seems to correspond to a subunit of a multimeric transport system and thus, additional subunits may be required for its function. May play a role in lysosomal ion flux and osmoregulation. The sequence is that of Solute carrier family 12 member 9 (SLC12A9) from Homo sapiens (Human).